An 824-amino-acid chain; its full sequence is Leucine--tRNA ligase (824 aa).

A 'HIGH' region motif is present at residues 41–51 (PYPSGTLHVGH). The short motif at 580-584 (KMSKS) is the 'KMSKS' region element. Position 583 (Lys583) interacts with ATP.

Belongs to the class-I aminoacyl-tRNA synthetase family.

Its subcellular location is the cytoplasm. The enzyme catalyses tRNA(Leu) + L-leucine + ATP = L-leucyl-tRNA(Leu) + AMP + diphosphate. This is Leucine--tRNA ligase from Thermotoga petrophila (strain ATCC BAA-488 / DSM 13995 / JCM 10881 / RKU-1).